An 894-amino-acid polypeptide reads, in one-letter code: MSRRKQGNPQHLSQRELITPEADHVEAAILEEDEGLEIEEPSGLGLMVGGPDPDLLTCGQCQMNFPLGDILVFIEHKRKQCGGSLGACYDKALDKDSPPPSSRSELRKVSEPVEIGIQVTPDEDDHLLSPTKGICPKQENIAGPCRPAQLPAVAPIAASSHPHSSVITSPLRALGALPPCLPLPCCSARPVSGDGTQGEGQTEAPFGCQCQLSGKDEPSSYICTTCKQPFNSAWFLLQHAQNTHGFRIYLEPGPASSSLTPRLTIPPPLGPEAVAQSPLMNFLGDSNPFNLLRMTGPILRDHPGFGEGRLPGTPPLFSPPPRHHLDPHRLSAEEMGLVAQHPSAFDRVMRLNPMAIDSPAMDFSRRLRELAGNSSTPPPVSPGRGNPMHRLLNPFQPSPKSPFLSTPPLPPMPPGGTPPPQPPAKSKSCEFCGKTFKFQSNLIVHRRSHTGEKPYKCQLCDHACSQASKLKRHMKTHMHKAGSLAGRSDDGLSAASSPEPGTSELAGEGLKAADGDFRHHESDPSLGHEPEEEDEEEEEEEEELLLENESRPESSFSMDSELSRNRENGGGGVPGVPGAGGGAAKALADEKALVLGKVMENVGLGALPQYGELLADKQKRGAFLKRAAGGGDAGDDDDAGGCGDAGAGGAVNGRGGGFAPGTEPFPGLFPRKPAPLPSPGLNSAAKRIKVEKDLELPPAALIPSENVYSQWLVGYAASRHFMKDPFLGFTDARQSPFATSSEHSSENGSLRFSTPPGDLLDGGLSGRSGTASGGSTPHLGGPGPGRPSSKEGRRSDTCEYCGKVFKNCSNLTVHRRSHTGERPYKCELCNYACAQSSKLTRHMKTHGQIGKEVYRCDICQMPFSVYSTLEKHMKKWHGEHLLTNDVKIEQAERS.

Ser97 and Ser110 each carry phosphoserine. Thr120 is subject to Phosphothreonine. Ser129 bears the Phosphoserine mark. A Glycyl lysine isopeptide (Lys-Gly) (interchain with G-Cter in SUMO2) cross-link involves residue Lys137. The C2H2-type 1 zinc-finger motif lies at 221-251 (YICTTCKQPFNSAWFLLQHAQNTHGFRIYLE). Ser256 is modified (phosphoserine). Residue Thr260 is modified to Phosphothreonine. Ser277 is subject to Phosphoserine. Arg293 carries the post-translational modification Omega-N-methylarginine. Asymmetric dimethylarginine is present on Arg322. Position 358 is a phosphoserine (Ser358). Disordered regions lie at residues 370 to 428 (LAGN…KSKS) and 471 to 583 (KRHM…GGGA). Thr376 carries the phosphothreonine modification. A phosphoserine mark is found at Ser381, Ser398, and Ser401. Pro residues predominate over residues 396 to 423 (QPSPKSPFLSTPPLPPMPPGGTPPPQPP). Phosphothreonine is present on residues Thr406 and Thr417. C2H2-type zinc fingers lie at residues 427-454 (KSCEFCGKTFKFQSNLIVHRRSHTGEKP) and 455-482 (YKCQLCDHACSQASKLKRHMKTHMHKAG). Over residues 471–480 (KRHMKTHMHK) the composition is skewed to basic residues. Residues Ser483, Ser488, Ser496, and Ser497 each carry the phosphoserine modification. Residues 511 to 529 (KAADGDFRHHESDPSLGHE) are compositionally biased toward basic and acidic residues. The span at 530 to 546 (PEEEDEEEEEEEEELLL) shows a compositional bias: acidic residues. Over residues 568–583 (NGGGGVPGVPGAGGGA) the composition is skewed to gly residues. Glycyl lysine isopeptide (Lys-Gly) (interchain with G-Cter in SUMO2) cross-links involve residues Lys591 and Lys617. The segment at 653-680 (GRGGGFAPGTEPFPGLFPRKPAPLPSPG) is disordered. A Phosphoserine modification is found at Ser678. Glycyl lysine isopeptide (Lys-Gly) (interchain with G-Cter in SUMO2) cross-links involve residues Lys686 and Lys723. Polar residues predominate over residues 737–752 (FATSSEHSSENGSLRF). A disordered region spans residues 737–794 (FATSSEHSSENGSLRFSTPPGDLLDGGLSGRSGTASGGSTPHLGGPGPGRPSSKEGRR). A compositionally biased stretch (low complexity) spans 753-775 (STPPGDLLDGGLSGRSGTASGGS). A Phosphothreonine modification is found at Thr754. Ser765 and Ser772 each carry phosphoserine. 3 C2H2-type zinc fingers span residues 796–823 (DTCEYCGKVFKNCSNLTVHRRSHTGERP), 824–853 (YKCELCNYACAQSSKLTRHMKTHGQIGKEV), and 854–884 (YRCDICQMPFSVYSTLEKHMKKWHGEHLLTN). The residue at position 851 (Lys851) is an N6-acetyllysine. Lys887 is covalently cross-linked (Glycyl lysine isopeptide (Lys-Gly) (interchain with G-Cter in SUMO2)).

As to quaternary structure, interacts with TFCOUP1, SIRT1, ARP1 and EAR2. Interacts with EP300; the interaction is detected in activated T-lymphocytes, but not under resting conditions. Post-translationally, sumoylated with SUMO1. Highly expressed in brain and in malignant T-cell lines derived from patients with adult T-cell leukemia/lymphoma.

It is found in the nucleus. In terms of biological role, key regulator of both differentiation and survival of T-lymphocytes during thymocyte development in mammals. Essential in controlling the responsiveness of hematopoietic stem cells to chemotactic signals by modulating the expression of the receptors CCR7 and CCR9, which direct the movement of progenitor cells from the bone marrow to the thymus. Is a regulator of IL2 promoter and enhances IL2 expression in activated CD4(+) T-lymphocytes. Tumor-suppressor that represses transcription through direct, TFCOUP2-independent binding to a GC-rich response element. May also function in the P53-signaling pathway. The polypeptide is B-cell lymphoma/leukemia 11B (BCL11B) (Homo sapiens (Human)).